A 296-amino-acid polypeptide reads, in one-letter code: Fructose-bisphosphate aldolase class 1 (296 aa).

Glu-175 functions as the Proton acceptor in the catalytic mechanism. Lys-212 serves as the catalytic Schiff-base intermediate with dihydroxyacetone-P.

It belongs to the class I fructose-bisphosphate aldolase family.

The enzyme catalyses beta-D-fructose 1,6-bisphosphate = D-glyceraldehyde 3-phosphate + dihydroxyacetone phosphate. Its pathway is carbohydrate degradation; glycolysis; D-glyceraldehyde 3-phosphate and glycerone phosphate from D-glucose: step 4/4. The sequence is that of Fructose-bisphosphate aldolase class 1 (fda) from Staphylococcus carnosus (strain TM300).